The sequence spans 649 residues: 1,4-alpha-glucan branching enzyme GlgB (649 aa).

D315 functions as the Nucleophile in the catalytic mechanism. The Proton donor role is filled by E366.

This sequence belongs to the glycosyl hydrolase 13 family. GlgB subfamily. In terms of assembly, monomer.

The catalysed reaction is Transfers a segment of a (1-&gt;4)-alpha-D-glucan chain to a primary hydroxy group in a similar glucan chain.. It functions in the pathway glycan biosynthesis; glycogen biosynthesis. In terms of biological role, catalyzes the formation of the alpha-1,6-glucosidic linkages in glycogen by scission of a 1,4-alpha-linked oligosaccharide from growing alpha-1,4-glucan chains and the subsequent attachment of the oligosaccharide to the alpha-1,6 position. In Ligilactobacillus salivarius (strain UCC118) (Lactobacillus salivarius), this protein is 1,4-alpha-glucan branching enzyme GlgB.